The following is an 82-amino-acid chain: Large ribosomal subunit protein uL23 (82 aa).

It belongs to the universal ribosomal protein uL23 family. As to quaternary structure, part of the 50S ribosomal subunit. Contacts protein L29.

In terms of biological role, binds to 23S rRNA. One of the proteins that surrounds the polypeptide exit tunnel on the outside of the ribosome. This Methanococcoides burtonii (strain DSM 6242 / NBRC 107633 / OCM 468 / ACE-M) protein is Large ribosomal subunit protein uL23.